Here is a 478-residue protein sequence, read N- to C-terminus: UDP-N-acetylmuramate--L-alanine ligase (478 aa).

Position 120 to 126 (Gly-120 to Thr-126) interacts with ATP.

This sequence belongs to the MurCDEF family.

It is found in the cytoplasm. It carries out the reaction UDP-N-acetyl-alpha-D-muramate + L-alanine + ATP = UDP-N-acetyl-alpha-D-muramoyl-L-alanine + ADP + phosphate + H(+). Its pathway is cell wall biogenesis; peptidoglycan biosynthesis. Its function is as follows. Cell wall formation. In Rickettsia bellii (strain OSU 85-389), this protein is UDP-N-acetylmuramate--L-alanine ligase.